The chain runs to 404 residues: Intracellular hyaluronan-binding protein 4.L (404 aa).

Disordered regions lie at residues 1–21 (MRLDTMKETPSSPVNTEMQDN), 51–288 (LTRR…QEMS), and 359–379 (LTRPSRGRGGGGRGRVRREEA). Over residues 8–19 (ETPSSPVNTEMQ) the composition is skewed to polar residues. 3 stretches are compositionally biased toward basic and acidic residues: residues 71 to 81 (GKKESQKDRKA), 145 to 159 (KVDRAERRPAFREVR), and 165 to 184 (RSNEYSIEKPMEILDQDKQM). Positions 188 to 200 (GGRGGMRGRGRGG) are enriched in gly residues. Composition is skewed to basic and acidic residues over residues 205–233 (TENDNLRGKREFDRHSGSDRAIRPEDKRG) and 270–281 (EEHAKVPEEKNE).

It belongs to the SERBP1-HABP4 family. Associates with ribosomes; promoting ribosome stabilization. Interacts with eef2/eEF2; promoting ribosome stabilization.

It localises to the nucleus. It is found in the cytoplasm. The protein resides in the stress granule. Its subcellular location is the nucleolus. The protein localises to the nucleus speckle. It localises to the cajal body. Functionally, ribosome-binding protein that promotes ribosome hibernation, a process during which ribosomes are stabilized in an inactive state and preserved from proteasomal degradation. Acts via its association with eef2/eEF2 factor at the A-site of the ribosome, promoting ribosome stabilization in an inactive state compatible with storage. Plays a key role in ribosome hibernation in the mature egg by promoting ribosome stabilization. Ribosomes, which are produced in large quantities during oogenesis, are stored and translationally repressed in the egg and early embryo. In Xenopus laevis (African clawed frog), this protein is Intracellular hyaluronan-binding protein 4.L.